Reading from the N-terminus, the 383-residue chain is Galactokinase (383 aa).

A substrate-binding site is contributed by glutamate 34–aspartate 37. Residue glycine 124–serine 130 participates in ATP binding. Positions 130 and 162 each coordinate Mg(2+). Aspartate 174 (proton acceptor) is an active-site residue. Residue tyrosine 223 coordinates substrate.

Belongs to the GHMP kinase family. GalK subfamily.

It is found in the cytoplasm. The catalysed reaction is alpha-D-galactose + ATP = alpha-D-galactose 1-phosphate + ADP + H(+). It participates in carbohydrate metabolism; galactose metabolism. Catalyzes the transfer of the gamma-phosphate of ATP to D-galactose to form alpha-D-galactose-1-phosphate (Gal-1-P). This is Galactokinase from Serratia proteamaculans (strain 568).